Reading from the N-terminus, the 1212-residue chain is MAACRAQPPTSEQAWLEAAQTFIQETLCPAGKEVDKELTRSVIACVKETWLSQGENQDLTLPFSYSFVSVQSLKTHQRLPCCSHLSWSQSAYQAWTRGGRPGDGVLPREQLILLGTLVDLLGDSEQECRSGSLYVRDNTGTLDCELIDLDLSWLGHLFLFPSWSYLPSAKRNSLGEGHLELWGTPVPVFPLTVSPGPLIPIPVLYPEKASHLLRYRKKSSIKEINLAGKLVHLSALIITQNKRYFIMTLGELAQAGSQVSIIVQIPAQMVWHRVLRPGRAYVLTKLQVTKTRIHLSCIWTTIPSSTLKPLRPGYVQELELDLEFSKADLKPPPQPTSSKDSRGQEGLVRASKVLHYLGTVTAVLHESAGLYILDGQLILCLAYQKIHGLRRVIRPGVCLELRDVHLLQAVGGATTKPVLALCLHGTVRLQGFSCLKPLTLPSSKVYGASLYEQLVWKCQLGLPLYLWAAKTLEDLIYKLCPHVLRCHQFLKQPSPGKPSLGLQLLAPSWDVLIPPGSPMRHAYSEILEEPHNCPLQKYTPLQTPYSFPTMLALAEEGQHRAWATFDPKAMLPLPEASHLTSCQLNRHLAWSWVCLPSCVFQPAQVLLGVLVASSRKGCLELRDLRGSLPCIPLTESSQPLIDPNLVGCLVRVEKFQLVVEREVRSSFPSWEEMGMARFIQKKQARVYVQFYLADALILPVPRPTFGSEPSQTASSCPEGPHLGQSRLFLLSHKEALMKRNFCLLPGDSSQPAKPTLSFHVSGTWLCGTQRKEGSGWSPPESLAVESKDQKVFLIFLGSSVRWFPFLYPNQVYRLVASGPSQTPVFETEGSAGTSRRPLELADCGSCLTVQEEWTLELGSSQDIPNVLEVPRTLPESSLAQLLGDNSPDSLVSFSAEILSRILCEPPLALRRMKPGNAGAIKTGVKLTVALEMDDCEYPPHLDIYIEDPQLPPQIGLLPGARVHFSQLEKRISRSNIVYCCFRSSTSVQVLSFPPETKASAPLPHIYLAELLQGDRPPFQATTSCHIVYVLSLQILWVCAHCTSICPQGKCSRRDPSCPSQRAVSQANIRLLVEDGTAEATVICRNHLVARALGLSPSEWSSILEHARGPGRVALQFTGLGGQTESASKTHEPLTLLLRTLCTSPFVLRPVKLSFALERRPTDISPREPSRLQQFQCGELPLLTRVNPRLRLVCLSLQEPELPNPPQASAASS.

It belongs to the CTC1 family. As to quaternary structure, component of the CST complex, composed of TEN1/C17orf106, CTC1/C17orf68 and STN1; in the complex interacts directly with STN1. Interacts with ACD and POT1.

It localises to the nucleus. It is found in the chromosome. The protein resides in the telomere. Component of the CST complex proposed to act as a specialized replication factor promoting DNA replication under conditions of replication stress or natural replication barriers such as the telomere duplex. The CST complex binds single-stranded DNA with high affinity in a sequence-independent manner, while isolated subunits bind DNA with low affinity by themselves. Initially the CST complex has been proposed to protect telomeres from DNA degradation. However, the CST complex has been shown to be involved in several aspects of telomere replication. The CST complex inhibits telomerase and is involved in telomere length homeostasis; it is proposed to bind to newly telomerase-synthesized 3' overhangs and to terminate telomerase action implicating the association with the ACD:POT1 complex thus interfering with its telomerase stimulation activity. The CST complex is also proposed to be involved in fill-in synthesis of the telomeric C-strand probably implicating recruitment and activation of DNA polymerase alpha. The CST complex facilitates recovery from many forms of exogenous DNA damage; seems to be involved in the re-initiation of DNA replication at repaired forks and/or dormant origins. Involved in telomere maintenance. Involved in genome stability. May be in involved in telomeric C-strand fill-in during late S/G2 phase. This Mus musculus (Mouse) protein is CST complex subunit CTC1 (Ctc1).